Consider the following 420-residue polypeptide: D-tagatose-1,6-bisphosphate aldolase subunit GatZ (420 aa).

It belongs to the GatZ/KbaZ family. GatZ subfamily. Forms a complex with GatY.

It participates in carbohydrate metabolism; D-tagatose 6-phosphate degradation; D-glyceraldehyde 3-phosphate and glycerone phosphate from D-tagatose 6-phosphate: step 2/2. Functionally, component of the tagatose-1,6-bisphosphate aldolase GatYZ that is required for full activity and stability of the Y subunit. Could have a chaperone-like function for the proper and stable folding of GatY. When expressed alone, GatZ does not show any aldolase activity. Is involved in the catabolism of galactitol. The sequence is that of D-tagatose-1,6-bisphosphate aldolase subunit GatZ from Escherichia coli (strain SMS-3-5 / SECEC).